Reading from the N-terminus, the 367-residue chain is MSTAVNTIRCSLLLLGLVGIYTVWISSFRNGLFLRNEEFAGKGQLPGTPNATLRTHFTGIDTLDKALGIFVVFYWPVCQGNLRSLSLIAFPAAVGVGEMWILFALQFSQSNSPTRAMGKMAMFGMGLMLVGPGIFLPIYCSLDLSSTHRLDDSPSSAAEGHLCRNLRSCLLGGYYILVILLALPSPAVVSYGSKQGIIALLQGWPLLVSAMLWLTHLCGKDRTADFQATLSTARTSIYISAMACATISHLVPLLISLLADSSDICPGKVFVPHLAWPSRRVTSVEEGLLRFFQWDYGLGSLALLLWAVGLHIQRRQQISQGINYLRLIPEALFLSVMMSPCGAAALYLYRHNSTNCASKTGDKSGSG.

The helical transmembrane segment at 8-28 (IRCSLLLLGLVGIYTVWISSF) threads the bilayer. Residue Asn-50 is glycosylated (N-linked (GlcNAc...) asparagine). 8 helical membrane passes run 57-77 (FTGIDTLDKALGIFVVFYWPV), 85-105 (LSLIAFPAAVGVGEMWILFAL), 120-140 (MAMFGMGLMLVGPGIFLPIYC), 169-189 (CLLGGYYILVILLALPSPAVV), 197-217 (IIALLQGWPLLVSAMLWLTHL), 239-259 (ISAMACATISHLVPLLISLLA), 292-312 (FQWDYGLGSLALLLWAVGLHI), and 327-347 (LIPEALFLSVMMSPCGAAALY). Asn-352 carries N-linked (GlcNAc...) asparagine glycosylation.

The protein belongs to the membrane-bound ascI terpene cyclase family.

The protein localises to the membrane. The protein operates within secondary metabolite biosynthesis; terpenoid biosynthesis. Its pathway is mycotoxin biosynthesis. In terms of biological role, terpene cyclase; part of the gene cluster that mediates the biosynthesis of the neurotoxin verrucosidin, a methylated alpha-pyrone polyketide that inhibits oxidative phosphorylation in mitochondria and thereby causes neurological diseases. The carbon backbone of verrucosidin is synthesized by the HR-PKS verA, and further modified by the other verrucodidin cluster enzymes. The chain is Terpene cyclase verU1 from Penicillium polonicum.